Here is a 516-residue protein sequence, read N- to C-terminus: Squalene epoxidase 5 (516 aa).

Helical transmembrane passes span 3–23 and 45–65; these read FTNVCLWTLLAFMLTWTVFYV and ATDVIIVGAGVGGSALAYALA. FAD contacts are provided by residues 55–56, 75–76, R83, F88, R156, V172, D335, and M348; these read VG and ER. A helical transmembrane segment spans residues 446-466; that stretch reads LIYHLCAITLSSIGHLLSPFP.

This sequence belongs to the squalene monooxygenase family. The cofactor is FAD. As to expression, expressed in seedlings, leaves, stems and inflorescences. Detected in siliques.

It localises to the membrane. The enzyme catalyses squalene + reduced [NADPH--hemoprotein reductase] + O2 = (S)-2,3-epoxysqualene + oxidized [NADPH--hemoprotein reductase] + H2O + H(+). Its pathway is terpene metabolism; lanosterol biosynthesis; lanosterol from farnesyl diphosphate: step 2/3. Its function is as follows. Catalyzes the stereospecific oxidation of squalene to (S)-2,3-epoxysqualene, and is considered to be a rate-limiting enzyme in steroid biosynthesis. The sequence is that of Squalene epoxidase 5 (SQE5) from Arabidopsis thaliana (Mouse-ear cress).